The primary structure comprises 141 residues: Hemoglobin subunit beta (141 aa).

The 140-residue stretch at 2–141 folds into the Globin domain; that stretch reads HWSEVELHEI…VVDAISKEYH (140 aa). Residues His-58 and His-87 each contribute to the heme b site.

Belongs to the globin family. Heterotetramer of two alpha chains and two beta chains. Red blood cells.

In terms of biological role, involved in oxygen transport from the lung to the various peripheral tissues. The protein is Hemoglobin subunit beta (HBB) of Heterodontus portusjacksoni (Port Jackson shark).